Here is a 319-residue protein sequence, read N- to C-terminus: Acetyl-coenzyme A carboxylase carboxyl transferase subunit alpha (319 aa).

Residues 39 to 293 form the CoA carboxyltransferase C-terminal domain; it reads RLQKKSNDLT…KAVLEKQLHE (255 aa).

The protein belongs to the AccA family. Acetyl-CoA carboxylase is a heterohexamer composed of biotin carboxyl carrier protein (AccB), biotin carboxylase (AccC) and two subunits each of ACCase subunit alpha (AccA) and ACCase subunit beta (AccD).

Its subcellular location is the cytoplasm. The enzyme catalyses N(6)-carboxybiotinyl-L-lysyl-[protein] + acetyl-CoA = N(6)-biotinyl-L-lysyl-[protein] + malonyl-CoA. It participates in lipid metabolism; malonyl-CoA biosynthesis; malonyl-CoA from acetyl-CoA: step 1/1. Component of the acetyl coenzyme A carboxylase (ACC) complex. First, biotin carboxylase catalyzes the carboxylation of biotin on its carrier protein (BCCP) and then the CO(2) group is transferred by the carboxyltransferase to acetyl-CoA to form malonyl-CoA. This chain is Acetyl-coenzyme A carboxylase carboxyl transferase subunit alpha, found in Neisseria gonorrhoeae (strain ATCC 700825 / FA 1090).